The following is a 339-amino-acid chain: Diguanylate cyclase VdcA (339 aa).

A GGDEF domain is found at 206–339 (QQVSLIMLDI…NLGRNRVMPL (134 aa)). Asp214 serves as a coordination point for Mg(2+). Substrate is bound by residues Asn222 and Asp231. Glu257 serves as a coordination point for Mg(2+). Glu257 functions as the Proton acceptor in the catalytic mechanism.

It depends on Mg(2+) as a cofactor.

It catalyses the reaction 2 GTP = 3',3'-c-di-GMP + 2 diphosphate. Its pathway is purine metabolism; 3',5'-cyclic di-GMP biosynthesis. Its function is as follows. Diguanylate cyclase (DGC) that catalyzes the synthesis of cyclic diguanylate (c-di-GMP) via the condensation of 2 GTP molecules. Is involved in the modulation of intracellular c-di-GMP levels. Cyclic-di-GMP is a second messenger which positively regulates biofilm formation and negatively regulates virulence in V.cholerae, and is proposed to play an important role in the transition from persistence in the environment to survival in the host. Overexpression of vdcA results in increased biofilm formation, and reduced motility and virulence. In Vibrio cholerae serotype O1 (strain ATCC 39315 / El Tor Inaba N16961), this protein is Diguanylate cyclase VdcA (vdcA).